A 721-amino-acid chain; its full sequence is Catalase-peroxidase (721 aa).

The tryptophyl-tyrosyl-methioninium (Trp-Tyr) (with M-238) cross-link spans 89 to 212 (WHSAGTYRTG…LAAVQMGLIY (124 aa)). H90 serves as the catalytic Proton acceptor. Positions 212–238 (YVNPEGPNGDPDPFAAAVDIRETFARM) form a cross-link, tryptophyl-tyrosyl-methioninium (Tyr-Met) (with W-89). H253 is a binding site for heme b.

It belongs to the peroxidase family. Peroxidase/catalase subfamily. In terms of assembly, homodimer or homotetramer. Heme b is required as a cofactor. Formation of the three residue Trp-Tyr-Met cross-link is important for the catalase, but not the peroxidase activity of the enzyme.

The enzyme catalyses H2O2 + AH2 = A + 2 H2O. It catalyses the reaction 2 H2O2 = O2 + 2 H2O. In terms of biological role, bifunctional enzyme with both catalase and broad-spectrum peroxidase activity. This chain is Catalase-peroxidase, found in Shewanella baltica (strain OS155 / ATCC BAA-1091).